The sequence spans 360 residues: MNVPLGGIWLWLPLLLTWLTPEVSSSWWYMRATGGSSRVMCDNVPGLVSRQRQLCHRHPDVMRAIGLGVAEWTAECQHQFRQHRWNCNTLDRDHSLFGRVLLRSSRESAFVYAISSAGVVFAITRACSQGELKSCSCDPKKKGSAKDSKGTFDWGGCSDNIDYGIKFARAFVDAKERKGKDARALMNLHNNRAGRKAVKRFLKQECKCHGVSGSCTLRTCWLAMADFRKTGDYLWRKYNGAIQVVMNQDGTGFTVANKRFKKPTKNDLVYFENSPDYCIRDREAGSLGTAGRVCNLTSRGMDSCEVMCCGRGYDTSHVTRMTKCECKFHWCCAVRCQDCLEALDVHTCKAPKSADWATPT.

The signal sequence occupies residues 1-25 (MNVPLGGIWLWLPLLLTWLTPEVSS). 11 disulfide bridges follow: cysteine 76–cysteine 87, cysteine 127–cysteine 135, cysteine 137–cysteine 157, cysteine 206–cysteine 220, cysteine 208–cysteine 215, cysteine 278–cysteine 309, cysteine 294–cysteine 304, cysteine 308–cysteine 348, cysteine 324–cysteine 339, cysteine 326–cysteine 336, and cysteine 331–cysteine 332. The O-palmitoleoyl serine; by PORCN moiety is linked to residue serine 212. N-linked (GlcNAc...) asparagine glycosylation is present at asparagine 295.

The protein belongs to the Wnt family. Post-translationally, palmitoleoylation is required for efficient binding to frizzled receptors. Depalmitoleoylation leads to Wnt signaling pathway inhibition. In embryos in the developing allantois, pericardium heart, and ventral-lateral mesoderm; in adults in lung, brain, heart and placenta.

Its subcellular location is the secreted. It localises to the extracellular space. The protein localises to the extracellular matrix. In terms of biological role, ligand for members of the frizzled family of seven transmembrane receptors. Functions in the canonical Wnt/beta-catenin signaling pathway. Functions as a upstream regulator of FGF10 expression. Plays an important role in embryonic lung development. May contribute to embryonic brain development by regulating the proliferation of dopaminergic precursors and neurons. This chain is Protein Wnt-2 (Wnt2), found in Mus musculus (Mouse).